Consider the following 236-residue polypeptide: Small ribosomal subunit protein uS2c (236 aa).

This sequence belongs to the universal ribosomal protein uS2 family.

It is found in the plastid. The protein resides in the chloroplast. The sequence is that of Small ribosomal subunit protein uS2c (rps2) from Aethionema grandiflorum (Persian stone-cress).